A 426-amino-acid polypeptide reads, in one-letter code: Anaerobic glycerol-3-phosphate dehydrogenase subunit C (426 aa).

4Fe-4S ferredoxin-type domains lie at 21 to 53 (SYKY…LYPG) and 67 to 99 (KSAE…GDLI). Positions 32, 35, 38, 42, 79, 82, 85, and 89 each coordinate [4Fe-4S] cluster.

In terms of assembly, composed of a catalytic GlpA/B dimer and of GlpC.

Its subcellular location is the cell inner membrane. It functions in the pathway polyol metabolism; glycerol degradation via glycerol kinase pathway; glycerone phosphate from sn-glycerol 3-phosphate (anaerobic route): step 1/1. Its function is as follows. Electron transfer protein; may also function as the membrane anchor for the GlpAB dimer. The sequence is that of Anaerobic glycerol-3-phosphate dehydrogenase subunit C (glpC) from Haemophilus influenzae (strain ATCC 51907 / DSM 11121 / KW20 / Rd).